The chain runs to 398 residues: FK506-binding protein 4 (398 aa).

3 disordered regions span residues 66–120 (EVDE…DEYE), 164–232 (VKHP…QLAK), and 245–288 (DLIA…KKNK). Residues 170-228 (EPLEDLYSDEDSEEYSDDELDQEIEEDDELDHDEASSEESDEDQEFYDAISEGDEDIDE) show a composition bias toward acidic residues. A compositionally biased stretch (basic and acidic residues) spans 264 to 287 (PETKKSKKTKDEKNTKATENEKKN). Residues 312 to 398 (GSKVGMRYIG…TFDVKLVSLK (87 aa)) form the PPIase FKBP-type domain.

It belongs to the FKBP-type PPIase family. FKBP3/4 subfamily. As to quaternary structure, binds to histones H3 and H4.

It localises to the nucleus. It catalyses the reaction [protein]-peptidylproline (omega=180) = [protein]-peptidylproline (omega=0). Its activity is regulated as follows. Inhibited by both FK506 and rapamycin. PPIase that acts as a histone chaperone. Histone proline isomerase that increases the rate of cis-trans isomerization at prolines on the histone H3 N-terminal tail. Proline isomerization influences H3 methylation thereby regulating gene expression. The polypeptide is FK506-binding protein 4 (FPR4) (Candida glabrata (strain ATCC 2001 / BCRC 20586 / JCM 3761 / NBRC 0622 / NRRL Y-65 / CBS 138) (Yeast)).